A 329-amino-acid polypeptide reads, in one-letter code: Glucokinase (329 aa).

13 to 18 contributes to the ATP binding site; it reads GDIGGT.

It belongs to the bacterial glucokinase family.

Its subcellular location is the cytoplasm. The enzyme catalyses D-glucose + ATP = D-glucose 6-phosphate + ADP + H(+). This Caulobacter sp. (strain K31) protein is Glucokinase.